Here is a 907-residue protein sequence, read N- to C-terminus: Leucine-rich repeat-containing G-protein coupled receptor 5 (907 aa).

The N-terminal stretch at 1–21 (MDTSCVHMLLSLLALLQLVAA) is a signal peptide. Over 22–561 (GSSPGPDAIP…EHLFGSWLIR (540 aa)) the chain is Extracellular. The LRRNT domain occupies 25 to 66 (PGPDAIPRGCPSHCHCELDGRMLLRVDCSDLGLSELPSNLSV). 2 disulfides stabilise this stretch: cysteine 34/cysteine 40 and cysteine 38/cysteine 52. Asparagine 63 and asparagine 77 each carry an N-linked (GlcNAc...) asparagine glycan. 16 LRR repeats span residues 67–88 (FTSY…LLHR), 91–112 (FLEE…AFTG), 115–136 (SLKV…ALQN), 139–160 (SLQS…CFSG), 163–184 (SLRH…AFRS), 187–208 (ALQA…AFGN), 211–232 (SLVV…CFDG), 235–256 (SLET…IKTL), 258–279 (NLKE…AFVG), 282–303 (SLIT…AFQH), 306–325 (ELRT…PHLT), 329–350 (TLES…VCDQ), 353–374 (NLQV…SGCQ), 375–396 (KLQK…TFQQ), 399–420 (NLRS…AFST), and 423–446 (SLIK…HGLT). The N-linked (GlcNAc...) asparagine glycan is linked to asparagine 208. Residues cysteine 348 and cysteine 373 are joined by a disulfide bond. A disulfide bridge connects residues cysteine 479 and cysteine 541. The chain crosses the membrane as a helical span at residues 562 to 582 (IGVWTTAVLALSCNALVALTV). The Cytoplasmic portion of the chain corresponds to 583 to 593 (FRTPLYISSIK). Residues 594–614 (LLIGVIAVVDILMGVSSAVLA) form a helical membrane-spanning segment. Residues 615–638 (AVDAFTFGRFAQHGAWWEDGIGCQ) lie on the Extracellular side of the membrane. Cysteine 637 and cysteine 712 are disulfide-bonded. A helical transmembrane segment spans residues 639 to 659 (IVGFLSIFASESSIFLLTLAA). At 660-682 (LERGFSVKCSSKFEVKAPLFSLR) the chain is on the cytoplasmic side. Residues 683 to 703 (AIVLLCVLLALTIATIPLLGG) traverse the membrane as a helical segment. Topologically, residues 704 to 723 (SKYNASPLCLPLPFGEPSTT) are extracellular. A helical transmembrane segment spans residues 724 to 744 (GYMVALVLLNSLCFLIMTIAY). The Cytoplasmic portion of the chain corresponds to 745-767 (TKLYCSLEKGELENLWDCSMVKH). The helical transmembrane segment at 768–788 (IALLLFANCILYCPVAFLSFS) threads the bilayer. Over 789 to 802 (SLLNLTFISPDVIK) the chain is Extracellular. N-linked (GlcNAc...) asparagine glycosylation is present at asparagine 792. A helical membrane pass occupies residues 803–823 (FILLVIVPLPSCLNPLLYIVF). The Cytoplasmic segment spans residues 824 to 907 (NPHFKEDMGS…LSSVAFVPCL (84 aa)).

Belongs to the G-protein coupled receptor 1 family. As to quaternary structure, identified in a complex composed of RNF43, LGR5 and RSPO1. Also interacts with other R-spondin ligands, including RSPO2, RSPO3 and RSPO4. Expressed in the intestinal epithelium (at protein level). Expressed in the gonads, the adrenal gland, and in the brain. In the central nervous system expression is restricted to the olfactory bulb. In the adrenal gland detected only in the neural-crest derived chromaffin cells of the medulla, but not in the cells of the adrenal cortex. In the gonads, the expression is high in Graafian follicle, but absent from primary and secondary follicles. In the intestine, exclusively expressed in cycling crypt base columnar cells. Expressed in the lower bulge and secondary germ area of telogen hair follicles and in the lower outer root sheath of anagen hair follicle.

It is found in the cell membrane. The protein resides in the golgi apparatus. It localises to the trans-Golgi network membrane. Functionally, receptor for R-spondins that potentiates the canonical Wnt signaling pathway and acts as a stem cell marker of the intestinal epithelium and the hair follicle. Upon binding to R-spondins (RSPO1, RSPO2, RSPO3 or RSPO4), associates with phosphorylated LRP6 and frizzled receptors that are activated by extracellular Wnt receptors, triggering the canonical Wnt signaling pathway to increase expression of target genes. In contrast to classical G-protein coupled receptors, does not activate heterotrimeric G-proteins to transduce the signal. Involved in the development and/or maintenance of the adult intestinal stem cells during postembryonic development. This is Leucine-rich repeat-containing G-protein coupled receptor 5 (Lgr5) from Mus musculus (Mouse).